Reading from the N-terminus, the 211-residue chain is Uridine kinase (211 aa).

Position 12–19 (12–19) interacts with ATP; it reads GGSGSGKT.

The protein belongs to the uridine kinase family.

It localises to the cytoplasm. The enzyme catalyses uridine + ATP = UMP + ADP + H(+). It carries out the reaction cytidine + ATP = CMP + ADP + H(+). It functions in the pathway pyrimidine metabolism; CTP biosynthesis via salvage pathway; CTP from cytidine: step 1/3. It participates in pyrimidine metabolism; UMP biosynthesis via salvage pathway; UMP from uridine: step 1/1. The polypeptide is Uridine kinase (Anoxybacillus flavithermus (strain DSM 21510 / WK1)).